Here is a 324-residue protein sequence, read N- to C-terminus: Adenine deaminase (324 aa).

Residues H11, H13, and H189 each contribute to the Zn(2+) site. The active-site Proton donor is the E192. D270 provides a ligand contact to Zn(2+). D271 is a substrate binding site.

Belongs to the metallo-dependent hydrolases superfamily. Adenosine and AMP deaminases family. Adenine deaminase type 2 subfamily. It depends on Zn(2+) as a cofactor.

The catalysed reaction is adenine + H2O + H(+) = hypoxanthine + NH4(+). Catalyzes the hydrolytic deamination of adenine to hypoxanthine. Plays an important role in the purine salvage pathway and in nitrogen catabolism. This chain is Adenine deaminase, found in Sinorhizobium fredii (strain NBRC 101917 / NGR234).